A 395-amino-acid chain; its full sequence is Chaperone protein DnaJ (395 aa).

Residues 5-70 (DFYEVLGVDK…NKRAAYDRMG (66 aa)) form the J domain. The CR-type zinc finger occupies 145 to 223 (GKDETIKVPT…CDGVGRVRKT (79 aa)). Zn(2+)-binding residues include cysteine 158, cysteine 161, cysteine 175, cysteine 178, cysteine 197, cysteine 200, cysteine 211, and cysteine 214. CXXCXGXG motif repeat units follow at residues 158-165 (CERCDGQG), 175-182 (CGTCQGAG), 197-204 (CPQCGGRG), and 211-218 (CNDCDGVG).

Belongs to the DnaJ family. As to quaternary structure, homodimer. Requires Zn(2+) as cofactor.

It localises to the cytoplasm. Functionally, participates actively in the response to hyperosmotic and heat shock by preventing the aggregation of stress-denatured proteins and by disaggregating proteins, also in an autonomous, DnaK-independent fashion. Unfolded proteins bind initially to DnaJ; upon interaction with the DnaJ-bound protein, DnaK hydrolyzes its bound ATP, resulting in the formation of a stable complex. GrpE releases ADP from DnaK; ATP binding to DnaK triggers the release of the substrate protein, thus completing the reaction cycle. Several rounds of ATP-dependent interactions between DnaJ, DnaK and GrpE are required for fully efficient folding. Also involved, together with DnaK and GrpE, in the DNA replication of plasmids through activation of initiation proteins. In Maricaulis maris (strain MCS10) (Caulobacter maris), this protein is Chaperone protein DnaJ.